The primary structure comprises 299 residues: Acetyl-hydrolase (299 aa).

Positions 73 to 75 (HGG) match the Involved in the stabilization of the negatively charged intermediate by the formation of the oxyanion hole motif. Catalysis depends on residues Ser-143, Glu-237, and His-267.

The protein belongs to the 'GDXG' lipolytic enzyme family.

The protein operates within secondary metabolite biosynthesis; bialaphos biosynthesis. This protein removes the N-acetyl group from bialaphos as one of the final steps of biosynthesis of phosphinothricin tripeptide (PTT), also known as bialaphos (BA), a natural-product antibiotic and potent herbicide. In Streptomyces hygroscopicus, this protein is Acetyl-hydrolase (bah).